We begin with the raw amino-acid sequence, 155 residues long: Small ribosomal subunit protein uS7cz/uS7cy (155 aa).

Belongs to the universal ribosomal protein uS7 family. As to quaternary structure, part of the 30S ribosomal subunit.

It localises to the plastid. Its subcellular location is the chloroplast. In terms of biological role, one of the primary rRNA binding proteins, it binds directly to 16S rRNA where it nucleates assembly of the head domain of the 30S subunit. The polypeptide is Small ribosomal subunit protein uS7cz/uS7cy (rps7-A) (Acorus calamus var. americanus (American sweet flag)).